A 503-amino-acid chain; its full sequence is Protein DETOXIFICATION 36 (503 aa).

The next 12 membrane-spanning stretches (helical) occupy residues 54 to 74, 87 to 107, 137 to 157, 166 to 186, 203 to 223, 225 to 245, 271 to 293, 313 to 333, 355 to 375, 399 to 419, 427 to 447, and 456 to 476; these read LFHL…MSML, LAAA…LMLG, IVLV…KPLL, VASV…AYAV, SAYI…LSVF, FGWG…IIVL, GLWD…SWYS, LAIC…FNAA, AVTT…ILSW, FLAI…VAVG, AYVN…VLGF, and IWTG…IVTF.

This sequence belongs to the multi antimicrobial extrusion (MATE) (TC 2.A.66.1) family.

It localises to the membrane. The sequence is that of Protein DETOXIFICATION 36 from Arabidopsis thaliana (Mouse-ear cress).